Here is a 25-residue protein sequence, read N- to C-terminus: Flagellar filament core protein flaB1 (25 aa).

This sequence belongs to the bacterial flagellin family. In terms of assembly, the flagellum consists of an outer layer composed of two sheath proteins, flaA1 (44 kDa) and flaA2 (35 kDa) around a core that contains three proteins flaB1 (37 kDa), flaB2 (34 kDa) and flaB3 (32 kDa).

It localises to the periplasmic flagellum. Its subcellular location is the periplasm. Its function is as follows. Component of the core of the flagella. The protein is Flagellar filament core protein flaB1 (flaB1) of Brachyspira hyodysenteriae (Treponema hyodysenteriae).